The chain runs to 301 residues: Probable 5-dehydro-4-deoxyglucarate dehydratase (301 aa).

Belongs to the DapA family.

It carries out the reaction 5-dehydro-4-deoxy-D-glucarate + H(+) = 2,5-dioxopentanoate + CO2 + H2O. The protein operates within carbohydrate acid metabolism; D-glucarate degradation; 2,5-dioxopentanoate from D-glucarate: step 2/2. The chain is Probable 5-dehydro-4-deoxyglucarate dehydratase from Cereibacter sphaeroides (strain ATCC 17029 / ATH 2.4.9) (Rhodobacter sphaeroides).